The primary structure comprises 464 residues: ATP-dependent protease ATPase subunit HslU (464 aa).

ATP-binding positions include V18, 60–65 (GVGKTE), D277, E342, and R414.

This sequence belongs to the ClpX chaperone family. HslU subfamily. A double ring-shaped homohexamer of HslV is capped on each side by a ring-shaped HslU homohexamer. The assembly of the HslU/HslV complex is dependent on binding of ATP.

The protein resides in the cytoplasm. ATPase subunit of a proteasome-like degradation complex; this subunit has chaperone activity. The binding of ATP and its subsequent hydrolysis by HslU are essential for unfolding of protein substrates subsequently hydrolyzed by HslV. HslU recognizes the N-terminal part of its protein substrates and unfolds these before they are guided to HslV for hydrolysis. The sequence is that of ATP-dependent protease ATPase subunit HslU from Lactobacillus leichmannii.